The following is a 303-amino-acid chain: Ferrochelatase (303 aa).

2 residues coordinate Fe cation: histidine 185 and glutamate 262.

Belongs to the ferrochelatase family.

Its subcellular location is the cytoplasm. The enzyme catalyses heme b + 2 H(+) = protoporphyrin IX + Fe(2+). It functions in the pathway porphyrin-containing compound metabolism; protoheme biosynthesis; protoheme from protoporphyrin-IX: step 1/1. In terms of biological role, catalyzes the ferrous insertion into protoporphyrin IX. The protein is Ferrochelatase of Campylobacter jejuni (strain RM1221).